The following is a 476-amino-acid chain: Lactate utilization protein B (476 aa).

2 consecutive 4Fe-4S ferredoxin-type domains span residues glycine 304–tyrosine 334 and tyrosine 353–leucine 382. The [4Fe-4S] cluster site is built by cysteine 313, cysteine 316, cysteine 319, cysteine 323, cysteine 366, cysteine 369, and cysteine 373.

It belongs to the LutB/YkgF family.

Its function is as follows. Is involved in L-lactate degradation and allows cells to grow with lactate as the sole carbon source. Has probably a role as an electron transporter during oxidation of L-lactate. The protein is Lactate utilization protein B of Bacillus velezensis (strain DSM 23117 / BGSC 10A6 / LMG 26770 / FZB42) (Bacillus amyloliquefaciens subsp. plantarum).